The primary structure comprises 135 residues: Sex-regulated protein janus-A (135 aa).

A substrate-binding site is contributed by Lys-37. The active-site Proton acceptor is the His-63. 104–106 (SQG) is a binding site for substrate.

The protein belongs to the janus family.

Functionally, janA and janB regulate somatic sex differentiation. The polypeptide is Sex-regulated protein janus-A (janA) (Drosophila yakuba (Fruit fly)).